Here is a 221-residue protein sequence, read N- to C-terminus: Eukaryotic translation initiation factor 3 subunit K (221 aa).

The region spanning 46–207 is the PCI domain; that stretch reads YDLEANLACL…NIKTKHITEK (162 aa).

It belongs to the eIF-3 subunit K family. As to quaternary structure, component of the eukaryotic translation initiation factor 3 (eIF-3) complex.

It is found in the cytoplasm. Component of the eukaryotic translation initiation factor 3 (eIF-3) complex, which is involved in protein synthesis of a specialized repertoire of mRNAs and, together with other initiation factors, stimulates binding of mRNA and methionyl-tRNAi to the 40S ribosome. The eIF-3 complex specifically targets and initiates translation of a subset of mRNAs involved in cell proliferation. This is Eukaryotic translation initiation factor 3 subunit K from Aedes aegypti (Yellowfever mosquito).